A 168-amino-acid polypeptide reads, in one-letter code: Ubiquitin-conjugating enzyme E2 7 (168 aa).

A disordered region spans residues 1–21 (MATAPARRASSSRSSSEISRT). In terms of domain architecture, UBC core spans 6 to 166 (ARRASSSRSS…VRRAVRKSQE (161 aa)). Cysteine 92 acts as the Glycyl thioester intermediate in catalysis.

This sequence belongs to the ubiquitin-conjugating enzyme family.

It carries out the reaction S-ubiquitinyl-[E1 ubiquitin-activating enzyme]-L-cysteine + [E2 ubiquitin-conjugating enzyme]-L-cysteine = [E1 ubiquitin-activating enzyme]-L-cysteine + S-ubiquitinyl-[E2 ubiquitin-conjugating enzyme]-L-cysteine.. It functions in the pathway protein modification; protein ubiquitination. Catalyzes the covalent attachment of ubiquitin to other proteins so as to signal them for selective protein degradation. Involved in the formation of multiubiquitin chains. The protein is Ubiquitin-conjugating enzyme E2 7 (UBC7) of Triticum aestivum (Wheat).